A 153-amino-acid chain; its full sequence is Catabolic 3-dehydroquinase (153 aa).

Tyr-24 (proton acceptor) is an active-site residue. Residues Asn-75, His-81, and Asp-88 each contribute to the substrate site. His-101 functions as the Proton donor in the catalytic mechanism. Substrate contacts are provided by residues 102-103 and Arg-112; that span reads VS.

This sequence belongs to the type-II 3-dehydroquinase family. In terms of assembly, homododecamer. Adopts a ring-like structure, composed of an arrangement of two hexameric rings stacked on top of one another.

It catalyses the reaction 3-dehydroquinate = 3-dehydroshikimate + H2O. The protein operates within aromatic compound metabolism; 3,4-dihydroxybenzoate biosynthesis; 3,4-dihydroxybenzoate from 3-dehydroquinate: step 1/2. Is involved in the catabolism of quinate. Allows the utilization of quinate as carbon source via the beta-ketoadipate pathway. This chain is Catabolic 3-dehydroquinase, found in Emericella nidulans (strain FGSC A4 / ATCC 38163 / CBS 112.46 / NRRL 194 / M139) (Aspergillus nidulans).